The primary structure comprises 1755 residues: Transposon Ty1-GR1 Gag-Pol polyprotein (1755 aa).

Residues 1 to 16 (MESQQLSQHSHISHGS) are compositionally biased toward low complexity. Disordered regions lie at residues 1 to 93 (MESQ…MMTQ), 126 to 173 (PQSQ…RPPP), and 352 to 421 (GSRN…SKST). Composition is skewed to polar residues over residues 48 to 60 (TKAN…TPAS), 71 to 93 (SPQT…MMTQ), and 127 to 152 (QSQF…GNTF). Residues 153 to 165 (TDSSSADSDMTST) show a composition bias toward low complexity. The interval 299 to 401 (NNGIHINNKV…NSKSKTARAH (103 aa)) is RNA-binding. Residues 402 to 418 (NVSTSNNSPSTDNDSIS) are compositionally biased toward low complexity. Ser416 carries the post-translational modification Phosphoserine. Asp461 functions as the For protease activity; shared with dimeric partner in the catalytic mechanism. The interval 583 to 640 (NVHTSESTRKYPYPFIHRMLAHANAQTIRYSLKNNTITYFNESDVDWSSAIDYQCPDC) is integrase-type zinc finger-like. Residues 660-835 (NSYEPFQYLH…AGLDISTLLP (176 aa)) form the Integrase catalytic domain. Asp671 and Asp736 together coordinate Mg(2+). Disordered regions lie at residues 956–1087 (SKAV…ETEK), 1092–1111 (RSPS…NIVP), and 1130–1187 (DLPL…DNET). The segment covering 960-969 (SPTDSTPPST) has biased composition (low complexity). A compositionally biased stretch (polar residues) spans 1005 to 1015 (STPQISNIEST). Residues 1038-1053 (ESSHASKSKDFRHSDS) show a composition bias toward basic and acidic residues. Polar residues-rich tracts occupy residues 1054–1082 (YSEN…QISD) and 1101–1111 (PENNSSHNIVP). The short motif at 1178–1212 (KKRSLEDNETEIKVSRDTWNTKNMRSLEPPRSKKR) is the Bipartite nuclear localization signal element. A Reverse transcriptase Ty1/copia-type domain is found at 1338–1476 (NNYYITQLDI…DILGLEIKYQ (139 aa)). 6 residues coordinate Mg(2+): Asp1346, Asp1427, Asp1428, Asp1610, Glu1652, and Asp1685. Residues 1610 to 1752 (DASYGNQPYY…IKTFKLLTNK (143 aa)) enclose the RNase H Ty1/copia-type domain.

In terms of assembly, the capsid protein forms a homotrimer, from which the VLPs are assembled. The protease is a homodimer, whose active site consists of two apposed aspartic acid residues. Post-translationally, initially, virus-like particles (VLPs) are composed of the structural unprocessed proteins Gag and Gag-Pol, and also contain the host initiator methionine tRNA (tRNA(i)-Met) which serves as a primer for minus-strand DNA synthesis, and a dimer of genomic Ty RNA. Processing of the polyproteins occurs within the particle and proceeds by an ordered pathway, called maturation. First, the protease (PR) is released by autocatalytic cleavage of the Gag-Pol polyprotein yielding capsid protein p45 and a Pol-p154 precursor protein. This cleavage is a prerequisite for subsequent processing of Pol-p154 at the remaining sites to release the mature structural and catalytic proteins. Maturation takes place prior to the RT reaction and is required to produce transposition-competent VLPs.

Its subcellular location is the cytoplasm. It localises to the nucleus. The enzyme catalyses DNA(n) + a 2'-deoxyribonucleoside 5'-triphosphate = DNA(n+1) + diphosphate. The catalysed reaction is Endonucleolytic cleavage to 5'-phosphomonoester.. Its function is as follows. Capsid protein (CA) is the structural component of the virus-like particle (VLP), forming the shell that encapsulates the retrotransposons dimeric RNA genome. The particles are assembled from trimer-clustered units and there are holes in the capsid shells that allow for the diffusion of macromolecules. CA also has nucleocapsid-like chaperone activity, promoting primer tRNA(i)-Met annealing to the multipartite primer-binding site (PBS), dimerization of Ty1 RNA and initiation of reverse transcription. The aspartyl protease (PR) mediates the proteolytic cleavages of the Gag and Gag-Pol polyproteins after assembly of the VLP. In terms of biological role, reverse transcriptase/ribonuclease H (RT) is a multifunctional enzyme that catalyzes the conversion of the retro-elements RNA genome into dsDNA within the VLP. The enzyme displays a DNA polymerase activity that can copy either DNA or RNA templates, and a ribonuclease H (RNase H) activity that cleaves the RNA strand of RNA-DNA heteroduplexes during plus-strand synthesis and hydrolyzes RNA primers. The conversion leads to a linear dsDNA copy of the retrotransposon that includes long terminal repeats (LTRs) at both ends. Functionally, integrase (IN) targets the VLP to the nucleus, where a subparticle preintegration complex (PIC) containing at least integrase and the newly synthesized dsDNA copy of the retrotransposon must transit the nuclear membrane. Once in the nucleus, integrase performs the integration of the dsDNA into the host genome. The sequence is that of Transposon Ty1-GR1 Gag-Pol polyprotein (TY1B-GR1) from Saccharomyces cerevisiae (strain ATCC 204508 / S288c) (Baker's yeast).